The sequence spans 367 residues: Selenoprotein Pa (367 aa).

The signal sequence occupies residues 1 to 19 (MWKALSLTLALCLLVGCSA). Position 59 (selenocysteine 59) is a non-standard amino acid, selenocysteine. The N-linked (GlcNAc...) asparagine glycan is linked to asparagine 109. Residues 191-220 (EVNKPVEEEPRQDHGHHEHGHHEHQGEAER) are compositionally biased toward basic and acidic residues. The disordered stretch occupies residues 191–241 (EVNKPVEEEPRQDHGHHEHGHHEHQGEAERHRHGHHHPHHHHHHHRGQQQV). Basic residues predominate over residues 221–237 (HRHGHHHPHHHHHHHRG). Residues selenocysteine 267, selenocysteine 273, selenocysteine 279, selenocysteine 290, selenocysteine 292, selenocysteine 294, selenocysteine 310, selenocysteine 320, selenocysteine 322, selenocysteine 336, selenocysteine 338, selenocysteine 346, selenocysteine 353, selenocysteine 355, selenocysteine 362, and selenocysteine 364 are each a non-standard amino acid (selenocysteine). Residues 309-367 (LUHCDEPLPASUPUQGLKEQDNHIKETUQURPAPPAEUELSQPTUVUPAGDATUGURKK) are disordered. Positions 326–336 (KEQDNHIKETU) are enriched in basic and acidic residues.

The protein belongs to the selenoprotein P family.

The protein resides in the secreted. In terms of biological role, might be responsible for some of the extracellular antioxidant defense properties of selenium or might be involved in the transport of selenium. The sequence is that of Selenoprotein Pa (sepp1a) from Danio rerio (Zebrafish).